A 1895-amino-acid chain; its full sequence is MSYNDPNLNGQYYSNGDGTGDGNYPTYQVTQDQSAYDEYGQPIYTQNQLDDGYYDPNEQYVDGTQFPQGQDPSQDQGPYNNDASYYNQPPNMMNPSSQDGENFSDFSSYGPPSGTYPNDQYTPSQMSYPDQDGSSGASTPYGNGVVNGNGQYYDPNAIEMALPNDPYPAWTADPQSPLPIEQIEDIFIDLTNKFGFQRDSMRNMFDHFMTLLDSRSSRMSPEQALLSLHADYIGGDTANYKKWYFAAQLDMDDEIGFRNMKLGKLSRKARKAKKKNKKAMQEASPEDTEETLNQIEGDNSLEAADFRWKSKMNQLSPFEMVRQIALFLLCWGEANQVRFTPECLCFIYKCASDYLDSAQCQQRPDPLPEGDFLNRVITPLYRFIRSQVYEIVDGRYVKSEKDHNKVIGYDDVNQLFWYPEGIAKIVMEDGTRLIDLPAEERYLKLGEIPWDDVFFKTYKETRSWLHLVTNFNRIWIMHISVYWMYCAYNAPTFYTHNYQQLVDNQPLAAYKWATAALGGTVASLIQVAATLCEWSFVPRKWAGAQHLSRRFWFLCVIMGINLGPVIFVFAYDKDTVYSTAAHVVGAVMFFVAVATLVFFSVMPLGGLFTSYMKKSTRSYVASQTFTASFAPLHGLDRWMSYLVWVTVFAAKYAESYFFLILSLRDPIRILSTTSMRCTGEYWWGNKICKVQPKIVLGLMIATDFILFFLDTYLWYIVVNTVFSVGKSFYLGISILTPWRNIFTRLPKRIYSKILATTDMEIKYKPKVLISQIWNAIIISMYREHLLAIDHVQKLLYHQVPSEIEGKRTLRAPTFFVSQDDNNFETEFFPRDSEAERRISFFAQSLSTPIPEPLPVDNMPTFTVLTPHYAERILLSLREIIREDDQFSRVTLLEYLKQLHPVEWDCFVKDTKILAEETAAYENNEDEPEKEDALKSQIDDLPFYCIGFKSAAPEYTLRTRIWASLRSQTLYRTISGFMNYSRAIKLLYRVENPEIVQMFGGNADGLERELEKMARRKFKFLVSMQRLAKFKPHELENAEFLLRAYPDLQIAYLDEEPPLNEGEEPRIYSALIDGHCEILENGRRRPKFRVQLSGNPILGDGKSDNQNHALIFYRGEYIQLIDANQDNYLEECLKIRSVLAEFEELGIEQIHPYTPGLKYEDQSTNHPVAIVGAREYIFSENSGVLGDVAAGKEQTFGTLFARTLAQIGGKLHYGHPDFINATFMTTRGGVSKAQKGLHLNEDIYAGMNAVLRGGRIKHCEYYQCGKGRDLGFGTILNFTTKIGAGMGEQMLSREYYYLGTQLPIDRFLTFYYAHPGFHLNNLFIQLSLQMFMLTLVNLHALAHESILCVYDRDKPITDVLYPIGCYNFHPAIDWVRRYTLSIFIVFWIAFVPIVVQELIERGLWKATQRFFRHILSLSPMFEVFAGQIYSSALLSDIAVGGARYISTGRGFATSRIPFSILYSRFAGSAIYMGSRSMLMLLFGTVAHWQAPLLWFWASLSALIFAPFIFNPHQFAWEDFFLDYRDYIRWLSRGNNKYHRNSWIGYVRMSRSRVTGFKRKLVGDESEKSAGDASRAHRTNLIMAEIIPCAIYAAGCFIAFTFINAQTGVKTTDEDRVNSTLRIIICTLAPIVIDIGVLFFCMGLSCCSGPLLGMCCKKTGSVMAGIAHGIAVVVHIVFFIVMWVLEGFSFVRMLIGVVTCIQCQRLIFHCMTVLLLTREFKNDHANTAFWTGKWYSTGLGYMAWTQPTRELTAKVIELSEFAADFVLGHVILIFQLPVICIPKIDKFHSIMLFWLKPSRQIRPPIYSLKQARLRKRMVRRYCSLYFLVLIIFAGCIVGPAVASAHVPKDLGSGLTGTFHNLVQPRNVSNNDTGSQMSTYKSHYYTHTPSLKTWSTIK.

Composition is skewed to polar residues over residues Met1–Gly16 and Pro25–Ser34. 2 disordered regions span residues Met1–Asn143 and Ala269–Leu292. Topologically, residues Met1–Arg473 are extracellular. The span at Gln65–Pro78 shows a compositional bias: low complexity. Polar residues-rich tracts occupy residues Tyr79–Ser107 and Thr115–Tyr141. Positions Ala269–Lys278 are enriched in basic residues. Residue Lys278 forms a Glycyl lysine isopeptide (Lys-Gly) (interchain with G-Cter in ubiquitin) linkage. Residues Thr288 and Thr291 each carry the phosphothreonine modification. A Glycyl lysine isopeptide (Lys-Gly) (interchain with G-Cter in ubiquitin) cross-link involves residue Lys405. Residues Ile474–Tyr494 form a helical membrane-spanning segment. Topologically, residues Thr495 to Lys511 are cytoplasmic. Residues Trp512–Cys532 form a helical membrane-spanning segment. At Glu533–Arg550 the chain is on the extracellular side. The helical transmembrane segment at Phe551–Tyr571 threads the bilayer. Topologically, residues Asp572–His582 are cytoplasmic. Residues Val583–Pro603 form a helical membrane-spanning segment. Topologically, residues Leu604 to Leu1579 are extracellular. Residues Lys929, Lys934, Lys1558, and Lys1566 each participate in a glycyl lysine isopeptide (Lys-Gly) (interchain with G-Cter in ubiquitin) cross-link. The chain crosses the membrane as a helical span at residues Ile1580 to Phe1600. The Cytoplasmic portion of the chain corresponds to Ile1601–Arg1620. The helical transmembrane segment at Ile1621–Gly1641 threads the bilayer. Residues Leu1642–Glu1758 lie on the Extracellular side of the membrane. A helical transmembrane segment spans residues Phe1759–Ile1779. Topologically, residues Pro1780–Ser1821 are cytoplasmic. Residues Leu1822–Ala1842 form a helical membrane-spanning segment. Over His1843 to Lys1895 the chain is Extracellular.

The protein belongs to the glycosyltransferase 48 family. Component of the 1,3-beta-glucan synthase (GS) complex, composed of two alternate catalytic subunits FKS1 or GSC2, and a regulatory subunit RHO1. Interacts with SMK1.

The protein localises to the membrane. The enzyme catalyses [(1-&gt;3)-beta-D-glucosyl](n) + UDP-alpha-D-glucose = [(1-&gt;3)-beta-D-glucosyl](n+1) + UDP + H(+). Functionally, alternate catalytic subunit of the 1,3-beta-glucan synthase (GS) complex. Synthesizes 1,3-beta-glucan, a major structural component of the yeast cell wall. Required for spore wall assembly. Negative regulation of activity by SMK1 is important for spore wall deposition. Activity is positively regulated by RHO1. The polypeptide is 1,3-beta-glucan synthase component GSC2 (Saccharomyces cerevisiae (strain ATCC 204508 / S288c) (Baker's yeast)).